A 307-amino-acid polypeptide reads, in one-letter code: Ribosomal RNA small subunit methyltransferase H (307 aa).

S-adenosyl-L-methionine is bound by residues G32 to H34, D52, F78, D99, and Q106.

It belongs to the methyltransferase superfamily. RsmH family.

The protein localises to the cytoplasm. The enzyme catalyses cytidine(1402) in 16S rRNA + S-adenosyl-L-methionine = N(4)-methylcytidine(1402) in 16S rRNA + S-adenosyl-L-homocysteine + H(+). Functionally, specifically methylates the N4 position of cytidine in position 1402 (C1402) of 16S rRNA. The polypeptide is Ribosomal RNA small subunit methyltransferase H (Acinetobacter baumannii (strain AB307-0294)).